The primary structure comprises 339 residues: Ketol-acid reductoisomerase (NADP(+)) (339 aa).

A KARI N-terminal Rossmann domain is found at 1–182; that stretch reads MRVYYDRDAD…GGGRAGIIET (182 aa). NADP(+) is bound by residues 24-27, arginine 48, serine 51, serine 53, and 83-86; these read YGSQ and DELQ. Histidine 108 is a catalytic residue. Residue glycine 134 participates in NADP(+) binding. Residues 183–328 enclose the KARI C-terminal knotted domain; the sequence is TFKEECETDL…ARLRDMMPWI (146 aa). Mg(2+)-binding residues include aspartate 191, glutamate 195, glutamate 227, and glutamate 231. Residue serine 252 coordinates substrate.

This sequence belongs to the ketol-acid reductoisomerase family. The cofactor is Mg(2+).

The enzyme catalyses (2R)-2,3-dihydroxy-3-methylbutanoate + NADP(+) = (2S)-2-acetolactate + NADPH + H(+). It catalyses the reaction (2R,3R)-2,3-dihydroxy-3-methylpentanoate + NADP(+) = (S)-2-ethyl-2-hydroxy-3-oxobutanoate + NADPH + H(+). Its pathway is amino-acid biosynthesis; L-isoleucine biosynthesis; L-isoleucine from 2-oxobutanoate: step 2/4. It participates in amino-acid biosynthesis; L-valine biosynthesis; L-valine from pyruvate: step 2/4. In terms of biological role, involved in the biosynthesis of branched-chain amino acids (BCAA). Catalyzes an alkyl-migration followed by a ketol-acid reduction of (S)-2-acetolactate (S2AL) to yield (R)-2,3-dihydroxy-isovalerate. In the isomerase reaction, S2AL is rearranged via a Mg-dependent methyl migration to produce 3-hydroxy-3-methyl-2-ketobutyrate (HMKB). In the reductase reaction, this 2-ketoacid undergoes a metal-dependent reduction by NADPH to yield (R)-2,3-dihydroxy-isovalerate. This Bradyrhizobium sp. (strain ORS 278) protein is Ketol-acid reductoisomerase (NADP(+)).